The sequence spans 499 residues: Glutamyl-tRNA(Gln) amidotransferase subunit A (499 aa).

Residues lysine 79 and serine 154 each act as charge relay system in the active site. Serine 178 (acyl-ester intermediate) is an active-site residue.

It belongs to the amidase family. GatA subfamily. In terms of assembly, heterotrimer of A, B and C subunits.

The catalysed reaction is L-glutamyl-tRNA(Gln) + L-glutamine + ATP + H2O = L-glutaminyl-tRNA(Gln) + L-glutamate + ADP + phosphate + H(+). In terms of biological role, allows the formation of correctly charged Gln-tRNA(Gln) through the transamidation of misacylated Glu-tRNA(Gln) in organisms which lack glutaminyl-tRNA synthetase. The reaction takes place in the presence of glutamine and ATP through an activated gamma-phospho-Glu-tRNA(Gln). In Psychrobacter sp. (strain PRwf-1), this protein is Glutamyl-tRNA(Gln) amidotransferase subunit A.